Consider the following 184-residue polypeptide: MSDIINETKSRMQKSIESLSRELANISAGRANSNLLNGVTVDYYGAPTPVQQLASINVPEARLLVISPYDKTSVADIEKAIIAANLGVNPTSDGEVIRIAVPALTEERRKERVKDVKKIGEEAKVSVRNIRRDMNDQLKKDEKNGDITEDELRSGTEDVQKATDNSIKEIDQMIADKEKDIMSV.

Positions M134 to I167 are disordered.

It belongs to the RRF family.

It is found in the cytoplasm. Functionally, responsible for the release of ribosomes from messenger RNA at the termination of protein biosynthesis. May increase the efficiency of translation by recycling ribosomes from one round of translation to another. The chain is Ribosome-recycling factor from Staphylococcus aureus (strain Mu3 / ATCC 700698).